A 264-amino-acid polypeptide reads, in one-letter code: Phosphonoacetaldehyde hydrolase (264 aa).

The Nucleophile role is filled by Asp9. 2 residues coordinate Mg(2+): Asp9 and Ala11. Catalysis depends on Lys50, which acts as the Schiff-base intermediate with substrate. Asp183 provides a ligand contact to Mg(2+).

This sequence belongs to the HAD-like hydrolase superfamily. PhnX family. Homodimer. The cofactor is Mg(2+).

It catalyses the reaction phosphonoacetaldehyde + H2O = acetaldehyde + phosphate + H(+). Its function is as follows. Involved in phosphonate degradation. The protein is Phosphonoacetaldehyde hydrolase of Bacillus cereus (strain ZK / E33L).